Here is a 130-residue protein sequence, read N- to C-terminus: MSGGKGKAGSSEKASTSRSAKAGLTFPVGRVHRLLRKGNYAQRIGSGAPVYLTSVLEYLAAEILELAGNAARDNKKSRIIPRHLQLAIRNDEELNKLLGHVTIAQGGVLPNIHQSLLPAKKAKTGASQEL.

Residues 1–22 (MSGGKGKAGSSEKASTSRSAKA) form a disordered region. Residue S2 is modified to N-acetylserine. An N6-acetyllysine mark is found at K5 and K7. Q105 bears the N5-methylglutamine mark. S127 carries the post-translational modification Phosphoserine. A [ST]-Q motif motif is present at residues 127 to 128 (SQ).

The protein belongs to the histone H2A family. In terms of assembly, the nucleosome is a histone octamer containing two molecules each of H2A, H2B, H3 and H4 assembled in one H3-H4 heterotetramer and two H2A-H2B heterodimers. The octamer wraps approximately 147 bp of DNA. In terms of processing, phosphorylated to form H2AS128ph (gamma-H2A) in response to DNA double-strand breaks (DSBs) generated by exogenous genotoxic agents and by stalled replication forks. Phosphorylation is dependent on the DNA damage checkpoint kinases MEC1/ATR and TEL1/ATM, spreads on either side of a detected DSB site and may mark the surrounding chromatin for recruitment of proteins required for DNA damage signaling and repair. Gamma-H2A is removed from the DNA prior to the strand invasion-primer extension step of the repair process and subsequently dephosphorylated. Dephosphorylation is necessary for efficient recovery from the DNA damage checkpoint. Acetylated by ESA1 to form H2AK4ac and H2AK7ac.

It localises to the nucleus. The protein resides in the chromosome. Its function is as follows. Core component of nucleosome which plays a central role in DNA double strand break (DSB) repair. Nucleosomes wrap and compact DNA into chromatin, limiting DNA accessibility to the cellular machineries which require DNA as a template. Histones thereby play a central role in transcription regulation, DNA repair, DNA replication and chromosomal stability. DNA accessibility is regulated via a complex set of post-translational modifications of histones, also called histone code, and nucleosome remodeling. The chain is Histone H2A.1 (HTA1) from Lodderomyces elongisporus (strain ATCC 11503 / CBS 2605 / JCM 1781 / NBRC 1676 / NRRL YB-4239) (Yeast).